We begin with the raw amino-acid sequence, 227 residues long: Killer cell lectin-like receptor subfamily B member 1A (227 aa).

At 1–45 (MDTARVYFGLKPPRTPGAWHESPPSLPPDACRCPRSHRLALKLSC) the chain is on the cytoplasmic side. Positions 31–34 (CRCP) match the LCK-binding motif motif. A helical; Signal-anchor for type II membrane protein membrane pass occupies residues 46–66 (AGLILLVVTLIGMSVLVRVLI). Topologically, residues 67 to 227 (QKPSIEKCYV…TLSNYVGYGH (161 aa)) are extracellular. One can recognise a C-type lectin domain in the interval 93 to 212 (ECPQDWLSHR…NSDNRWICQK (120 aa)). Intrachain disulfides connect C94–C105, C122–C210, and C189–C202.

In terms of assembly, homodimer; disulfide-linked. Interacts with tyrosine kinase LCK. In terms of tissue distribution, expressed in natural killer cells.

It localises to the membrane. In terms of biological role, plays a stimulatory role on natural killer (NK) cell cytotoxicity. The sequence is that of Killer cell lectin-like receptor subfamily B member 1A (Klrb1a) from Mus musculus (Mouse).